We begin with the raw amino-acid sequence, 143 residues long: Transcriptional regulator MraZ (143 aa).

SpoVT-AbrB domains lie at 5–47 (EYHH…PIEE) and 76–119 (AMES…SAER).

This sequence belongs to the MraZ family. In terms of assembly, forms oligomers.

The protein localises to the cytoplasm. It is found in the nucleoid. The sequence is that of Transcriptional regulator MraZ from Lactobacillus gasseri (strain ATCC 33323 / DSM 20243 / BCRC 14619 / CIP 102991 / JCM 1131 / KCTC 3163 / NCIMB 11718 / NCTC 13722 / AM63).